The following is a 165-amino-acid chain: Myosin regulatory light chain 2B, cardiac muscle isoform (165 aa).

Position 2 is a n,N,N-trimethylalanine (alanine 2). EF-hand domains lie at threonine 23 to leucine 58, aspartate 93 to arginine 128, and phenylalanine 129 to lysine 164. 4 residues coordinate Ca(2+): aspartate 36, asparagine 38, aspartate 40, and aspartate 47.

Myosin is a hexamer of 2 heavy chains and 4 light chains. The N-terminus is blocked. N,N,N-trimethylalanine, found in other myosin light chains would not have been detected in the N-terminal tryptic peptide in PubMed:7319048 because it would remain trimethylated and ninhydrin negative after hydrolysis.

In Gallus gallus (Chicken), this protein is Myosin regulatory light chain 2B, cardiac muscle isoform.